Reading from the N-terminus, the 315-residue chain is Methionyl-tRNA formyltransferase (315 aa).

113-116 contacts (6S)-5,6,7,8-tetrahydrofolate; sequence SLLP.

Belongs to the Fmt family.

The enzyme catalyses L-methionyl-tRNA(fMet) + (6R)-10-formyltetrahydrofolate = N-formyl-L-methionyl-tRNA(fMet) + (6S)-5,6,7,8-tetrahydrofolate + H(+). Its function is as follows. Attaches a formyl group to the free amino group of methionyl-tRNA(fMet). The formyl group appears to play a dual role in the initiator identity of N-formylmethionyl-tRNA by promoting its recognition by IF2 and preventing the misappropriation of this tRNA by the elongation apparatus. The protein is Methionyl-tRNA formyltransferase of Yersinia pseudotuberculosis serotype O:1b (strain IP 31758).